The primary structure comprises 271 residues: Elongation factor Ts (271 aa).

The involved in Mg(2+) ion dislocation from EF-Tu stretch occupies residues threonine 76 to valine 79.

It belongs to the EF-Ts family.

The protein resides in the cytoplasm. Associates with the EF-Tu.GDP complex and induces the exchange of GDP to GTP. It remains bound to the aminoacyl-tRNA.EF-Tu.GTP complex up to the GTP hydrolysis stage on the ribosome. The sequence is that of Elongation factor Ts from Mycobacterium ulcerans (strain Agy99).